The sequence spans 544 residues: Chaperonin GroEL (544 aa).

ATP is bound by residues 29-32 (TLGP), lysine 50, 86-90 (DGTTT), glycine 414, and aspartate 494.

This sequence belongs to the chaperonin (HSP60) family. In terms of assembly, forms a cylinder of 14 subunits composed of two heptameric rings stacked back-to-back. Interacts with the co-chaperonin GroES.

It is found in the cytoplasm. The catalysed reaction is ATP + H2O + a folded polypeptide = ADP + phosphate + an unfolded polypeptide.. Its function is as follows. Together with its co-chaperonin GroES, plays an essential role in assisting protein folding. The GroEL-GroES system forms a nano-cage that allows encapsulation of the non-native substrate proteins and provides a physical environment optimized to promote and accelerate protein folding. This Amoebophilus asiaticus (strain 5a2) protein is Chaperonin GroEL.